We begin with the raw amino-acid sequence, 129 residues long: uncharacterized protein (129 aa).

The N-terminal stretch at 1-21 is a signal peptide; sequence MAQNKTIAVALLLATLVAVMG.

This is an uncharacterized protein from Oryza sativa subsp. japonica (Rice).